The chain runs to 438 residues: GTPase Obg (438 aa).

In terms of domain architecture, Obg spans 2–160 (NMFVDQIKIE…HYLELELKML (159 aa)). The OBG-type G domain occupies 161–337 (ADVGLIGFPS…LMQLTADLLD (177 aa)). GTP contacts are provided by residues 167 to 174 (GFPSVGKS), 192 to 196 (FTTLT), 214 to 217 (DMPG), 284 to 287 (TKMD), and 318 to 320 (SAV). 2 residues coordinate Mg(2+): serine 174 and threonine 194. Positions 360-438 (PDKKDEADFT…IEKFVFEFIQ (79 aa)) constitute an OCT domain.

This sequence belongs to the TRAFAC class OBG-HflX-like GTPase superfamily. OBG GTPase family. Monomer. Requires Mg(2+) as cofactor.

It localises to the cytoplasm. Its function is as follows. An essential GTPase which binds GTP, GDP and possibly (p)ppGpp with moderate affinity, with high nucleotide exchange rates and a fairly low GTP hydrolysis rate. Plays a role in control of the cell cycle, stress response, ribosome biogenesis and in those bacteria that undergo differentiation, in morphogenesis control. The polypeptide is GTPase Obg (Limosilactobacillus reuteri (strain DSM 20016) (Lactobacillus reuteri)).